Reading from the N-terminus, the 151-residue chain is Large ribosomal subunit protein bL28c (151 aa).

A chloroplast-targeting transit peptide spans 1-74; that stretch reads MATMVAGISL…PFKPSLQPVA (74 aa).

The protein belongs to the bacterial ribosomal protein bL28 family. As to quaternary structure, part of the 50S ribosomal subunit.

Its subcellular location is the plastid. It localises to the chloroplast. This is Large ribosomal subunit protein bL28c (RPL28) from Nicotiana tabacum (Common tobacco).